The primary structure comprises 163 residues: 3-isopropylmalate dehydratase small subunit (163 aa).

It belongs to the LeuD family. LeuD type 2 subfamily. As to quaternary structure, heterodimer of LeuC and LeuD.

The enzyme catalyses (2R,3S)-3-isopropylmalate = (2S)-2-isopropylmalate. It functions in the pathway amino-acid biosynthesis; L-leucine biosynthesis; L-leucine from 3-methyl-2-oxobutanoate: step 2/4. Its function is as follows. Catalyzes the isomerization between 2-isopropylmalate and 3-isopropylmalate, via the formation of 2-isopropylmaleate. The sequence is that of 3-isopropylmalate dehydratase small subunit from Clostridioides difficile (strain 630) (Peptoclostridium difficile).